The following is a 473-amino-acid chain: Cysteine--tRNA ligase (473 aa).

Cysteine 30 is a binding site for Zn(2+). A 'HIGH' region motif is present at residues methionine 32–histidine 42. Residues cysteine 213, histidine 238, and glutamate 242 each contribute to the Zn(2+) site. The 'KMSKS' region signature appears at lysine 270–serine 274. ATP is bound at residue lysine 273.

This sequence belongs to the class-I aminoacyl-tRNA synthetase family. As to quaternary structure, monomer. The cofactor is Zn(2+).

The protein resides in the cytoplasm. It carries out the reaction tRNA(Cys) + L-cysteine + ATP = L-cysteinyl-tRNA(Cys) + AMP + diphosphate. This chain is Cysteine--tRNA ligase, found in Acinetobacter baumannii (strain AB307-0294).